The following is a 396-amino-acid chain: MPLSYSAAAAAAPSPLAARSRGLLRRPPRSSPVVVRCKKIDQLRAVNGIPPYAPVSNRSLLSPVTLPIIRDANIKNDTRLRIFSGTANPSLSQEIASYLGLELGKINIKRFADGEIYVQLQESVRGCDVFLVQPTCPPANENLMELLIMIDACRRASAKNITAVIPYFGYARADRKSQGRESIAAKLVANMITEAGANRVLVCDLHSSQAMGYFDIPVDHVYGQPVILDYLASKTICSDDLVVVSPDVGGVARARAFAKKLSDAPLAIVDKRRHGHNVAEVMNLIGDVRGKVAVMMDDMIDTAGTIAKGAELLHQEGAREVYACCTHAVFSPPAIERLSSGLFQEVIITNTIPLKEDKSFPQLTILSVANLLGETIWRVHDDCSVGHEPYSSLDID.

Residues 1–36 constitute a chloroplast transit peptide; it reads MPLSYSAAAAAAPSPLAARSRGLLRRPPRSSPVVVR. Mg(2+) is bound by residues Asp-204, His-206, Asp-215, and Asp-219. The interval 290–305 is binding of phosphoribosylpyrophosphate; sequence GKVAVMMDDMIDTAGT.

It belongs to the ribose-phosphate pyrophosphokinase family. Mg(2+) is required as a cofactor.

The protein localises to the plastid. Its subcellular location is the chloroplast. It catalyses the reaction D-ribose 5-phosphate + ATP = 5-phospho-alpha-D-ribose 1-diphosphate + AMP + H(+). The polypeptide is Ribose-phosphate pyrophosphokinase 1, chloroplastic (Oryza sativa subsp. japonica (Rice)).